Consider the following 1240-residue polypeptide: Protein MMS22-like (1240 aa).

The span at 1–11 (MESEFSQSLTP) shows a compositional bias: polar residues. A disordered region spans residues 1-26 (MESEFSQSLTPPVSPSALNHYGESAP).

It belongs to the MMS22 family. MMS22L subfamily. In terms of assembly, component of the MMS22L-TONSL complex.

It localises to the nucleus. The protein localises to the chromosome. Functionally, component of the MMS22L-TONSL complex, a complex that promotes homologous recombination-mediated repair of double-strand breaks (DSBs) at stalled or collapsed replication forks. The MMS22L-TONSL complex is required to maintain genome integrity during DNA replication. It mediates the assembly of RAD51 filaments on single-stranded DNA (ssDNA): the MMS22L-TONSL complex is recruited to DSBs following histone replacement by histone chaperones and eviction of the replication protein A complex (RPA/RP-A) from DSBs. Following recruitment to DSBs, the TONSL-MMS22L complex promotes recruitment of RAD51 filaments and subsequent homologous recombination. Within the complex, MMS22L acts by binding ssDNA. The chain is Protein MMS22-like (mms22l) from Danio rerio (Zebrafish).